The following is a 201-amino-acid chain: Protein tirC (201 aa).

A TIR domain is found at 52–186; sequence ERIKVFIVHG…YVWINYTEDL (135 aa).

The sequence is that of Protein tirC (tirC) from Dictyostelium discoideum (Social amoeba).